Reading from the N-terminus, the 472-residue chain is Type I restriction enzyme BthVORF4518P methylase subunit (472 aa).

S-adenosyl-L-methionine is bound by residues 151–156 (QYFTPR), 181–183 (TGG), Asp-214, and 243–244 (DS).

Belongs to the N(4)/N(6)-methyltransferase family. As to quaternary structure, the type I restriction/modification system is composed of three polypeptides R, M and S; the restriction enzyme has stoichiometry R(2)M(2)S(1) while the methyltransferase is M(2)S(1).

The enzyme catalyses a 2'-deoxyadenosine in DNA + S-adenosyl-L-methionine = an N(6)-methyl-2'-deoxyadenosine in DNA + S-adenosyl-L-homocysteine + H(+). The subtype gamma methyltransferase (M) subunit of a type I restriction enzyme. The M and S subunits together form a methyltransferase (MTase) that methylates two adenine residues of an undetermined sequence. In the presence of the R subunit the complex can also act as an endonuclease, binding to the same target sequence but cutting the DNA some distance from this site. Whether the DNA is cut or modified depends on the methylation state of the target sequence. When the target site is unmodified, the DNA is cut. When the target site is hemimethylated, the complex acts as a maintenance MTase modifying the DNA so that both strands become methylated. After locating a non-methylated recognition site, the enzyme complex serves as a molecular motor that translocates DNA in an ATP-dependent manner until a collision occurs that triggers cleavage. This chain is Type I restriction enzyme BthVORF4518P methylase subunit, found in Bacteroides thetaiotaomicron (strain ATCC 29148 / DSM 2079 / JCM 5827 / CCUG 10774 / NCTC 10582 / VPI-5482 / E50).